Reading from the N-terminus, the 363-residue chain is tRNA(Met) cytidine acetate ligase (363 aa).

ATP-binding positions include 7–20 (IAEF…HKYL), glycine 96, asparagine 152, and arginine 175.

It belongs to the TmcAL family.

The protein resides in the cytoplasm. It carries out the reaction cytidine(34) in elongator tRNA(Met) + acetate + ATP = N(4)-acetylcytidine(34) in elongator tRNA(Met) + AMP + diphosphate. Catalyzes the formation of N(4)-acetylcytidine (ac(4)C) at the wobble position of elongator tRNA(Met), using acetate and ATP as substrates. First activates an acetate ion to form acetyladenylate (Ac-AMP) and then transfers the acetyl group to tRNA to form ac(4)C34. The chain is tRNA(Met) cytidine acetate ligase from Streptococcus thermophilus (strain ATCC BAA-491 / LMD-9).